The sequence spans 366 residues: Protein-methionine-sulfoxide reductase catalytic subunit MsrP (366 aa).

Positions 1–22 are enriched in low complexity; sequence MHNTFTHTKNNTHTKNNTQAKN. A disordered region spans residues 1–40; sequence MHNTFTHTKNNTHTKNNTQAKNSGSQTKSNAVSLNKPRKL. The tat-type signal signal peptide spans 1-76; it reads MHNTFTHTKN…TLALPASAQA (76 aa). Polar residues predominate over residues 23–33; it reads SGSQTKSNAVS. Mo-molybdopterin-binding positions include N120, 123–124, C178, T213, N265, R270, and 281–283; these read YE and SIK.

It belongs to the MsrP family. Heterodimer of a catalytic subunit (MsrP) and a heme-binding subunit (MsrQ). The cofactor is Mo-molybdopterin. Post-translationally, predicted to be exported by the Tat system. The position of the signal peptide cleavage has not been experimentally proven.

The protein resides in the periplasm. The catalysed reaction is L-methionyl-[protein] + a quinone + H2O = L-methionyl-(S)-S-oxide-[protein] + a quinol. The enzyme catalyses L-methionyl-[protein] + a quinone + H2O = L-methionyl-(R)-S-oxide-[protein] + a quinol. Part of the MsrPQ system that repairs oxidized periplasmic proteins containing methionine sulfoxide residues (Met-O), using respiratory chain electrons. Thus protects these proteins from oxidative-stress damage caused by reactive species of oxygen and chlorine generated by the host defense mechanisms. MsrPQ is essential for the maintenance of envelope integrity under bleach stress, rescuing a wide series of structurally unrelated periplasmic proteins from methionine oxidation. The catalytic subunit MsrP is non-stereospecific, being able to reduce both (R-) and (S-) diastereoisomers of methionine sulfoxide. The polypeptide is Protein-methionine-sulfoxide reductase catalytic subunit MsrP (Yersinia pestis).